A 331-amino-acid polypeptide reads, in one-letter code: tRNA N6-adenosine threonylcarbamoyltransferase (331 aa).

Fe cation contacts are provided by His-107 and His-111. Substrate-binding positions include 129 to 133 (LVSGG), Asp-162, Gly-175, and Asn-269. Asp-297 provides a ligand contact to Fe cation.

The protein belongs to the KAE1 / TsaD family. Requires Fe(2+) as cofactor.

The protein localises to the cytoplasm. It carries out the reaction L-threonylcarbamoyladenylate + adenosine(37) in tRNA = N(6)-L-threonylcarbamoyladenosine(37) in tRNA + AMP + H(+). Its function is as follows. Required for the formation of a threonylcarbamoyl group on adenosine at position 37 (t(6)A37) in tRNAs that read codons beginning with adenine. Is involved in the transfer of the threonylcarbamoyl moiety of threonylcarbamoyl-AMP (TC-AMP) to the N6 group of A37, together with TsaE and TsaB. TsaD likely plays a direct catalytic role in this reaction. The chain is tRNA N6-adenosine threonylcarbamoyltransferase from Wolinella succinogenes (strain ATCC 29543 / DSM 1740 / CCUG 13145 / JCM 31913 / LMG 7466 / NCTC 11488 / FDC 602W) (Vibrio succinogenes).